We begin with the raw amino-acid sequence, 287 residues long: Nucleotide-binding protein Hhal_2130 (287 aa).

ATP is bound at residue 11-18; sequence GLSGSGKS. Residue 63-66 participates in GTP binding; sequence DARN.

The protein belongs to the RapZ-like family.

Displays ATPase and GTPase activities. In Halorhodospira halophila (strain DSM 244 / SL1) (Ectothiorhodospira halophila (strain DSM 244 / SL1)), this protein is Nucleotide-binding protein Hhal_2130.